The primary structure comprises 759 residues: Cullin-4A (759 aa).

Residues Met1–Ser40 form a disordered region. Residue Lys8 forms a Glycyl lysine isopeptide (Lys-Gly) (interchain with G-Cter in SUMO2) linkage. Ser10 bears the Phosphoserine mark. The span at Gly20–Pro31 shows a compositional bias: low complexity. Residue Lys33 forms a Glycyl lysine isopeptide (Lys-Gly) (interchain with G-Cter in ubiquitin) linkage. Positions Asp691–Asp750 constitute a Cullin neddylation domain. Lys705 participates in a covalent cross-link: Glycyl lysine isopeptide (Lys-Gly) (interchain with G-Cter in NEDD8).

This sequence belongs to the cullin family. As to quaternary structure, can self-associate. Component of multiple DCX (DDB1-CUL4-X-box) E3 ubiquitin-protein ligase complexes that seem to consist of DDB1, CUL4A or CUL4B, RBX1 and a variable substrate recognition component which seems to belong to a protein family described as DCAF (Ddb1- and Cul4-associated factor) or CDW (CUL4-DDB1-associated WD40-repeat) proteins. Component of the CSA complex (DCX(ERCC8) complex) containing ERCC8, RBX1, DDB1 and CUL4A; the CSA complex interacts with RNA polymerase II; upon UV irradiation it interacts with the COP9 signalosome and preferentially with the hyperphosphorylated form of RNA polymerase II. Component of the DCX(DET1-COP1) complex with the substrate recognition component DET1 and COP1. Component of the DCX(DDB2) complex with the substrate recognition component DDB2. Component of the DCX(DTL) complex with the putative substrate recognition component DTL. Component of DCX complexes part of the DesCEND (destruction via C-end degrons) pathway, which contain either TRPC4AP or DCAF12 as substrate-recognition component. Component of the DCX(AMBRA1) complex with the substrate recognition component AMBRA1. Interacts with DDB1, RBX1, RNF7, CDT1, TIP120A/CAND1, SKP2, CDKN1B, MDM2, TP53 and HOXA9. Interacts with DDB2; the interactions with DDB2 and CAND1 are mutually exclusive. Interacts with DCAF1, DTL, DDA1, DCAF6, DCAF4, DCAF16, DCAF17, DET1, WDTC1, DCAF5, DCAF11, WDR24A, COP1, PAFAH1B1, ERCC8, GRWD1, FBXW5, RBBP7, GNB2, WSB1, WSB2, NUP43, PWP1, FBXW8, ATG16L1, KATNB1, RBBP4, RBBP5, LRWD1 and DCAF8. May interact with WDR26, WDR51B, SNRNP40, WDR61, WDR76, WDR5. Interacts (when neddylated) with ARIH1; leading to activate the E3 ligase activity of ARIH1. The DDB1-CUL4A complex interacts with CRY1. Interacts (unneddylated form) with DCUN1D1, DCUN1D2, DCUN1D3, DCUN1D4 and DCUN1D5; these interactions promote the cullin neddylation. In terms of assembly, (Microbial infection) Interacts with murine cytomegalovirus M48. Neddylated; required for activity of cullin-RING-based E3 ubiquitin-protein ligase complexes. Deneddylated via its interaction with the COP9 signalosome (CSN) complex. In terms of processing, (Microbial infection) Deneddylated by murine cytomegalovirus M48 leading to a S-phase-like environment that is required for efficient replication of the viral genome. In terms of tissue distribution, expressed in oocytes (at protein level). In the ovary, also expressed in cumulus cells. Expressed in testis, spleen and kidney.

It participates in protein modification; protein ubiquitination. In terms of biological role, core component of multiple cullin-RING-based E3 ubiquitin-protein ligase complexes which mediate the ubiquitination of target proteins. As a scaffold protein may contribute to catalysis through positioning of the substrate and the ubiquitin-conjugating enzyme. The E3 ubiquitin-protein ligase activity of the complex is dependent on the neddylation of the cullin subunit and is inhibited by the association of the deneddylated cullin subunit with TIP120A/CAND1. The functional specificity of the E3 ubiquitin-protein ligase complex depends on the variable substrate recognition component. DCX(DET1-COP1) directs ubiquitination of JUN. DCX(DDB2) directs ubiquitination of XPC. DCX(DDB2) ubiquitinates histones H3-H4 and is required for efficient histone deposition during replication-coupled (H3.1) and replication-independent (H3.3) nucleosome assembly, probably by facilitating the transfer of H3 from ASF1A/ASF1B to other chaperones involved in histone deposition. DCX(DTL) plays a role in PCNA-dependent polyubiquitination of CDT1 and MDM2-dependent ubiquitination of p53/TP53 in response to radiation-induced DNA damage and during DNA replication. DCX(DTL) directs autoubiquitination of DTL. In association with DDB1 and SKP2 probably is involved in ubiquitination of CDKN1B/p27kip. Is involved in ubiquitination of HOXA9. The DDB1-CUL4A-DTL E3 ligase complex regulates the circadian clock function by mediating the ubiquitination and degradation of CRY1. The DCX(ERCC8) complex (also named CSA complex) plays a role in transcription-coupled repair (TCR). A number of DCX complexes (containing either TRPC4AP or DCAF12 as substrate-recognition component) are part of the DesCEND (destruction via C-end degrons) pathway, which recognizes a C-degron located at the extreme C terminus of target proteins, leading to their ubiquitination and degradation. With CUL4B, contributes to ribosome biogenesis. The DCX(AMBRA1) complex is a master regulator of the transition from G1 to S cell phase by mediating ubiquitination of phosphorylated cyclin-D (CCND1, CCND2 and CCND3). The DCX(AMBRA1) complex also acts as a regulator of Cul5-RING (CRL5) E3 ubiquitin-protein ligase complexes by mediating ubiquitination and degradation of Elongin-C (ELOC) component of CRL5 complexes. The polypeptide is Cullin-4A (Mus musculus (Mouse)).